Reading from the N-terminus, the 207-residue chain is dTTP/UTP pyrophosphatase (207 aa).

The active-site Proton acceptor is aspartate 87.

This sequence belongs to the Maf family. YhdE subfamily. A divalent metal cation is required as a cofactor.

It localises to the cytoplasm. It catalyses the reaction dTTP + H2O = dTMP + diphosphate + H(+). The enzyme catalyses UTP + H2O = UMP + diphosphate + H(+). In terms of biological role, nucleoside triphosphate pyrophosphatase that hydrolyzes dTTP and UTP. May have a dual role in cell division arrest and in preventing the incorporation of modified nucleotides into cellular nucleic acids. The chain is dTTP/UTP pyrophosphatase from Bordetella bronchiseptica (strain ATCC BAA-588 / NCTC 13252 / RB50) (Alcaligenes bronchisepticus).